The primary structure comprises 364 residues: Probable protein disulfide-isomerase A6 (364 aa).

Residues 1-28 form the signal peptide; sequence MKMEMHQIWSRIALASFAFAILFVSVSA. Thioredoxin domains lie at 29 to 137 and 139 to 256; these read DDVV…TEGG and NVKI…EKSG. Catalysis depends on nucleophile residues C58, C61, C177, and C180. Intrachain disulfides connect C58/C61 and C177/C180.

Belongs to the protein disulfide isomerase family.

It is found in the endoplasmic reticulum lumen. The catalysed reaction is Catalyzes the rearrangement of -S-S- bonds in proteins.. This chain is Probable protein disulfide-isomerase A6, found in Medicago sativa (Alfalfa).